Reading from the N-terminus, the 284-residue chain is 2-dehydro-3-deoxyphosphooctonate aldolase (284 aa).

This sequence belongs to the KdsA family.

Its subcellular location is the cytoplasm. The enzyme catalyses D-arabinose 5-phosphate + phosphoenolpyruvate + H2O = 3-deoxy-alpha-D-manno-2-octulosonate-8-phosphate + phosphate. It functions in the pathway carbohydrate biosynthesis; 3-deoxy-D-manno-octulosonate biosynthesis; 3-deoxy-D-manno-octulosonate from D-ribulose 5-phosphate: step 2/3. It participates in bacterial outer membrane biogenesis; lipopolysaccharide biosynthesis. This is 2-dehydro-3-deoxyphosphooctonate aldolase from Ralstonia pickettii (strain 12J).